The sequence spans 172 residues: Ribosome maturation factor RimM (172 aa).

Positions 96 to 168 (DGEFYYHEII…RIEVELMEGL (73 aa)) constitute a PRC barrel domain.

The protein belongs to the RimM family. In terms of assembly, binds ribosomal protein uS19.

It localises to the cytoplasm. An accessory protein needed during the final step in the assembly of 30S ribosomal subunit, possibly for assembly of the head region. Essential for efficient processing of 16S rRNA. May be needed both before and after RbfA during the maturation of 16S rRNA. It has affinity for free ribosomal 30S subunits but not for 70S ribosomes. This Streptococcus thermophilus (strain ATCC BAA-491 / LMD-9) protein is Ribosome maturation factor RimM.